A 164-amino-acid polypeptide reads, in one-letter code: HTH-type transcriptional regulator IscR (164 aa).

One can recognise an HTH rrf2-type domain in the interval 2–131 (RLTSKGRYAV…NNITLGELVN (130 aa)). A DNA-binding region (H-T-H motif) is located at residues 28 to 51 (LADISERQGISLSYLEQLFSRLRK). Positions 92, 98, and 104 each coordinate [2Fe-2S] cluster.

[2Fe-2S] cluster serves as cofactor.

Regulates the transcription of several operons and genes involved in the biogenesis of Fe-S clusters and Fe-S-containing proteins. This chain is HTH-type transcriptional regulator IscR, found in Salmonella agona (strain SL483).